A 1779-amino-acid chain; its full sequence is Fibronectin type III domain-containing protein 1 (1779 aa).

The signal sequence occupies residues 1–29 (MAPEARASPRLLLRAALLLLAALLPVASS). Fibronectin type-III domains are found at residues 33–126 (PVDH…KAPR), 103–203 (PNKP…AEED), 207–302 (VPED…TPES), and 307–402 (APEN…IPTT). The segment covering 400–413 (PTTSSTEASVQPNG) has biased composition (polar residues). Disordered regions lie at residues 400–442 (PTTS…MPPA), 459–1108 (NGVA…RNLD), 1120–1227 (EENT…KPNG), and 1330–1401 (PTTT…PPGT). Residues 423 to 437 (QQPSSSAPKVAASSQ) show a composition bias toward low complexity. Positions 493 to 506 (NPRSSRLETLNQKQ) are enriched in polar residues. Residues 534 to 554 (SRKEGMDRRGPSLDPHPHPRV) show a composition bias toward basic and acidic residues. 2 stretches are compositionally biased toward polar residues: residues 557 to 570 (SASSAYHQLSSTDN) and 590 to 607 (SSGSSPKNPGRSRPTSAP). Low complexity predominate over residues 629–640 (ASSSTSRQSHSS). S651 carries the post-translational modification Phosphoserine. Low complexity predominate over residues 676 to 694 (HASSSHTTSRTASSSHPSA). S699 is subject to Phosphoserine. The span at 707 to 720 (DSDRAAEDTIRRAE) shows a compositional bias: basic and acidic residues. Composition is skewed to polar residues over residues 763 to 784 (PSVSPQSTSASKVLTRSPSLPA) and 861 to 875 (PLSSKAQGFQQSTTD). The span at 879-904 (PQTSPASTSRQPSPARPPASRSQPSP) shows a compositional bias: low complexity. Polar residues-rich tracts occupy residues 957–971 (APQNQNEGAQSTYED) and 1003–1020 (VGSQSWSSDNRPQPSQAG). Residues 1085-1097 (LSTSVKKWPSSSS) show a composition bias toward low complexity. The segment covering 1098 to 1108 (PRDKYADRNLD) has biased composition (basic and acidic residues). 2 stretches are compositionally biased toward polar residues: residues 1147 to 1159 (NPATASPIANTHS) and 1166 to 1177 (RAPSSYSSTTPM). Over residues 1330–1389 (PTTTMPPSTTTTTVPPTTTLPPTTTTTRRTTTTRRTTTTRRPTTTTRATRRTTTTTTTPE) the composition is skewed to low complexity. Positions 1543 to 1637 (APRNITVVAM…PSVSFVTESD (95 aa)) constitute a Fibronectin type-III 5 domain. N-linked (GlcNAc...) asparagine glycosylation occurs at N1546.

It localises to the secreted. In terms of biological role, may be an activator of G protein signaling. The chain is Fibronectin type III domain-containing protein 1 (Fndc1) from Rattus norvegicus (Rat).